The following is an 827-amino-acid chain: Endoribonuclease YSH1 (827 aa).

Zn(2+) is bound by residues histidine 96, histidine 98, aspartate 100, histidine 101, histidine 184, and aspartate 205. Catalysis depends on histidine 426, which acts as the Proton donor. Histidine 448 contributes to the Zn(2+) binding site. The span at 583-592 shows a compositional bias: acidic residues; the sequence is EDDVAEEEED. 2 disordered regions span residues 583–621 and 802–827; these read EDDV…KEEE and DREE…KEEE. Residues 606–621 show a composition bias toward basic and acidic residues; it reads GEVKDETAEEVKKEEE.

The protein belongs to the metallo-beta-lactamase superfamily. RNA-metabolizing metallo-beta-lactamase-like family. CPSF2/YSH1 subfamily.

It localises to the nucleus. Its function is as follows. Component of the cleavage factor I (CF I) involved in pre-mRNA 3'-end processing. This chain is Endoribonuclease YSH1 (YSH1), found in Yarrowia lipolytica (strain CLIB 122 / E 150) (Yeast).